Consider the following 222-residue polypeptide: 7-cyano-7-deazaguanine synthase (222 aa).

ATP is bound at residue 8-18 (LSGGLDSATCL). Cys187, Cys197, Cys200, and Cys203 together coordinate Zn(2+).

This sequence belongs to the QueC family. It depends on Zn(2+) as a cofactor.

The catalysed reaction is 7-carboxy-7-deazaguanine + NH4(+) + ATP = 7-cyano-7-deazaguanine + ADP + phosphate + H2O + H(+). The protein operates within purine metabolism; 7-cyano-7-deazaguanine biosynthesis. Functionally, catalyzes the ATP-dependent conversion of 7-carboxy-7-deazaguanine (CDG) to 7-cyano-7-deazaguanine (preQ(0)). This is 7-cyano-7-deazaguanine synthase from Alcanivorax borkumensis (strain ATCC 700651 / DSM 11573 / NCIMB 13689 / SK2).